The chain runs to 331 residues: 6-phosphogluconolactonase (331 aa).

The protein belongs to the cycloisomerase 2 family.

The catalysed reaction is 6-phospho-D-glucono-1,5-lactone + H2O = 6-phospho-D-gluconate + H(+). The protein operates within carbohydrate degradation; pentose phosphate pathway; D-ribulose 5-phosphate from D-glucose 6-phosphate (oxidative stage): step 2/3. Functionally, catalyzes the hydrolysis of 6-phosphogluconolactone to 6-phosphogluconate. The sequence is that of 6-phosphogluconolactonase from Salmonella paratyphi B (strain ATCC BAA-1250 / SPB7).